A 378-amino-acid polypeptide reads, in one-letter code: Glutamate 5-kinase (378 aa).

Residue Lys19 coordinates ATP. Substrate-binding residues include Ser60, Asp147, and Asn159. Residues 179-180 (SD) and 221-227 (SGGMRTK) each bind ATP. Residues 285 to 362 (KGTLTIDAGA…GEMEQLLGYR (78 aa)) form the PUA domain.

The protein belongs to the glutamate 5-kinase family.

The protein localises to the cytoplasm. It carries out the reaction L-glutamate + ATP = L-glutamyl 5-phosphate + ADP. The protein operates within amino-acid biosynthesis; L-proline biosynthesis; L-glutamate 5-semialdehyde from L-glutamate: step 1/2. Its function is as follows. Catalyzes the transfer of a phosphate group to glutamate to form L-glutamate 5-phosphate. The sequence is that of Glutamate 5-kinase from Gluconobacter oxydans (strain 621H) (Gluconobacter suboxydans).